The following is a 172-amino-acid chain: uncharacterized protein (172 aa).

Residues 1–22 form the signal peptide; sequence MKLFQLLLLVLTISSFIISNNG. The Extracellular segment spans residues 23–140; it reads LVESHQGRMH…FSYENSSNET (118 aa). The segment at 27 to 69 is disordered; that stretch reads HQGRMHRGSGERHHRAGGNQQQPQPPSEQQVESSYNSNDDGSS. Over residues 29-42 the composition is skewed to basic residues; it reads GRMHRGSGERHHRA. Residues 53–69 show a composition bias toward low complexity; sequence SEQQVESSYNSNDDGSS. N-linked (GlcNAc...) asparagine glycans are attached at residues Asn-135 and Asn-138. Residues 141–161 form a helical membrane-spanning segment; sequence IVIYINPVTLVFTLVLLLTFI. Residues 162 to 172 are Cytoplasmic-facing; that stretch reads VLTITQSLRKY.

It is found in the membrane. This is an uncharacterized protein from Dictyostelium discoideum (Social amoeba).